The following is a 139-amino-acid chain: FAD synthase (139 aa).

ATP contacts are provided by residues 9 to 10 (TF), 14 to 17 (HPGH), and asparagine 92.

This sequence belongs to the archaeal FAD synthase family. Homodimer. Requires a divalent metal cation as cofactor.

It carries out the reaction FMN + ATP + H(+) = FAD + diphosphate. It functions in the pathway cofactor biosynthesis; FAD biosynthesis; FAD from FMN: step 1/1. In terms of biological role, catalyzes the transfer of the AMP portion of ATP to flavin mononucleotide (FMN) to produce flavin adenine dinucleotide (FAD) coenzyme. The sequence is that of FAD synthase from Methanocella paludicola (strain DSM 17711 / JCM 13418 / NBRC 101707 / SANAE).